A 430-amino-acid polypeptide reads, in one-letter code: Histidine--tRNA ligase (430 aa).

The protein belongs to the class-II aminoacyl-tRNA synthetase family. Homodimer.

It localises to the cytoplasm. It catalyses the reaction tRNA(His) + L-histidine + ATP = L-histidyl-tRNA(His) + AMP + diphosphate + H(+). In Chlorobium limicola (strain DSM 245 / NBRC 103803 / 6330), this protein is Histidine--tRNA ligase.